A 583-amino-acid polypeptide reads, in one-letter code: Long-chain-fatty-acid--AMP ligase FadD26 (583 aa).

The protein belongs to the ATP-dependent AMP-binding enzyme family.

It catalyses the reaction holo-[(phenol)carboxyphthiodiolenone synthase] + a long-chain fatty acid + ATP = a long-chain fatty acyl-[(phenol)carboxyphthiodiolenone synthase] + AMP + diphosphate. The catalysed reaction is eicosanoate + holo-[(phenol)carboxyphthiodiolenone synthase] + ATP = icosanoyl-[(phenol)carboxyphthiodiolenone synthase] + AMP + diphosphate. The enzyme catalyses holo-[(phenol)carboxyphthiodiolenone synthase] + docosanoate + ATP = docosanoyl-[(phenol)carboxyphthiodiolenone synthase] + AMP + diphosphate. Its pathway is lipid metabolism; fatty acid biosynthesis. In terms of biological role, catalyzes the activation of long-chain fatty acids as acyl-adenylates (acyl-AMP), which are then transferred to the multifunctional polyketide synthase PpsA for further chain extension. Catalyzes the adenylation of the long-chain fatty acids eicosanoate (C20) or docosanoate (C22), and potentially the very-long-chain fatty acid lignocerate (C24). Involved in the biosynthesis of phthiocerol dimycocerosate (DIM A) and phthiodiolone dimycocerosate (DIM B). This Mycobacterium tuberculosis (strain CDC 1551 / Oshkosh) protein is Long-chain-fatty-acid--AMP ligase FadD26 (fadD26).